The following is a 69-amino-acid chain: Conotoxin Cal12.1p4 (69 aa).

Residues 1-23 constitute a propeptide that is removed on maturation; that stretch reads DLITNSYTRGKPRHVTSWRNLKT.

In terms of processing, contains 4 disulfide bonds. In terms of tissue distribution, expressed by the venom duct.

The protein resides in the secreted. This chain is Conotoxin Cal12.1p4, found in Californiconus californicus (California cone).